A 416-amino-acid chain; its full sequence is CC-adding tRNA nucleotidyltransferase (416 aa).

31–34 (GAVR) is a CTP binding site. 2 residues coordinate Mg(2+): D46 and D48. CTP is bound by residues 106 to 107 (RD), N111, 148 to 157 (DPLRLLRAYR), and R188.

This sequence belongs to the tRNA nucleotidyltransferase/poly(A) polymerase family. Requires Mg(2+) as cofactor.

The enzyme catalyses a tRNA precursor + 2 CTP = a tRNA with a 3' CC end + 2 diphosphate. Its function is as follows. tRNA nucleotidyltransferase involved in the synthesis of the tRNA CCA terminus. Adds the two cytidine residues to tRNA. The polypeptide is CC-adding tRNA nucleotidyltransferase (Synechocystis sp. (strain ATCC 27184 / PCC 6803 / Kazusa)).